Reading from the N-terminus, the 698-residue chain is DNA ligase (698 aa).

NAD(+)-binding positions include 47–51, 96–97, and Glu-128; these read DAQYD and SL. Lys-130 functions as the N6-AMP-lysine intermediate in the catalytic mechanism. The NAD(+) site is built by Arg-151, Glu-186, Lys-303, and Lys-327. Zn(2+) contacts are provided by Cys-422, Cys-425, Cys-440, and Cys-446. The 79-residue stretch at 620–698 folds into the BRCT domain; the sequence is GDNLLLSNQT…EEEWIKMVNE (79 aa).

The protein belongs to the NAD-dependent DNA ligase family. LigA subfamily. Mg(2+) serves as cofactor. Mn(2+) is required as a cofactor.

The catalysed reaction is NAD(+) + (deoxyribonucleotide)n-3'-hydroxyl + 5'-phospho-(deoxyribonucleotide)m = (deoxyribonucleotide)n+m + AMP + beta-nicotinamide D-nucleotide.. DNA ligase that catalyzes the formation of phosphodiester linkages between 5'-phosphoryl and 3'-hydroxyl groups in double-stranded DNA using NAD as a coenzyme and as the energy source for the reaction. It is essential for DNA replication and repair of damaged DNA. In Orientia tsutsugamushi (strain Boryong) (Rickettsia tsutsugamushi), this protein is DNA ligase.